Reading from the N-terminus, the 364-residue chain is Histidinol-phosphate aminotransferase (364 aa).

At K226 the chain carries N6-(pyridoxal phosphate)lysine.

This sequence belongs to the class-II pyridoxal-phosphate-dependent aminotransferase family. Histidinol-phosphate aminotransferase subfamily. In terms of assembly, homodimer. Pyridoxal 5'-phosphate serves as cofactor.

It catalyses the reaction L-histidinol phosphate + 2-oxoglutarate = 3-(imidazol-4-yl)-2-oxopropyl phosphate + L-glutamate. Its pathway is amino-acid biosynthesis; L-histidine biosynthesis; L-histidine from 5-phospho-alpha-D-ribose 1-diphosphate: step 7/9. The chain is Histidinol-phosphate aminotransferase from Campylobacter jejuni subsp. doylei (strain ATCC BAA-1458 / RM4099 / 269.97).